We begin with the raw amino-acid sequence, 106 residues long: MTGTLDQLESTIAARRAADPSTSYVAALFAKGMPKIAQKLGEEAVETVIAAMAGDRRGVTGEAADLLFHLMVLLAEAGVPFADVLAELDRREGTSGLAEKAARPKG.

Belongs to the PRA-PH family.

It is found in the cytoplasm. It catalyses the reaction 1-(5-phospho-beta-D-ribosyl)-ATP + H2O = 1-(5-phospho-beta-D-ribosyl)-5'-AMP + diphosphate + H(+). The protein operates within amino-acid biosynthesis; L-histidine biosynthesis; L-histidine from 5-phospho-alpha-D-ribose 1-diphosphate: step 2/9. The sequence is that of Phosphoribosyl-ATP pyrophosphatase from Rhizorhabdus wittichii (strain DSM 6014 / CCUG 31198 / JCM 15750 / NBRC 105917 / EY 4224 / RW1) (Sphingomonas wittichii).